The primary structure comprises 396 residues: Tryptophan synthase beta chain (396 aa).

At lysine 86 the chain carries N6-(pyridoxal phosphate)lysine.

This sequence belongs to the TrpB family. As to quaternary structure, tetramer of two alpha and two beta chains. Requires pyridoxal 5'-phosphate as cofactor.

It catalyses the reaction (1S,2R)-1-C-(indol-3-yl)glycerol 3-phosphate + L-serine = D-glyceraldehyde 3-phosphate + L-tryptophan + H2O. It functions in the pathway amino-acid biosynthesis; L-tryptophan biosynthesis; L-tryptophan from chorismate: step 5/5. Its function is as follows. The beta subunit is responsible for the synthesis of L-tryptophan from indole and L-serine. This chain is Tryptophan synthase beta chain, found in Blochmanniella pennsylvanica (strain BPEN).